A 93-amino-acid chain; its full sequence is Alpha-defensin 22 (93 aa).

A signal peptide spans 1 to 19; that stretch reads MKKLVLLSALVLLAYQVQT. A propeptide spanning residues 20–58 is cleaved from the precursor; it reads DPIQNTDEETNTEEQPGEEDQAVSVSFGGQEGSALHEKL. Positions 22–41 are disordered; the sequence is IQNTDEETNTEEQPGEEDQA. The segment covering 25 to 40 has biased composition (acidic residues); that stretch reads TDEETNTEEQPGEEDQ. 3 cysteine pairs are disulfide-bonded: Cys-64-Cys-89, Cys-66-Cys-81, and Cys-71-Cys-88.

The protein belongs to the alpha-defensin family.

Its subcellular location is the secreted. May have microbicidal activities. This chain is Alpha-defensin 22 (Defa22), found in Mus musculus (Mouse).